A 440-amino-acid polypeptide reads, in one-letter code: Tyrosine--tRNA ligase (440 aa).

Tyr-46 provides a ligand contact to L-tyrosine. The short motif at 51–60 (PTAPSLHIGN) is the 'HIGH' region element. Residues Tyr-181 and Gln-185 each coordinate L-tyrosine. Residues 241-245 (KFGKS) carry the 'KMSKS' region motif. Lys-244 contacts ATP. The 58-residue stretch at 373-430 (DRIAQAGVSAGLFKSISEARKTIKSGGVYVNNVRVEDEEQLLGDGDFLKGRFVVLRRG) folds into the S4 RNA-binding domain.

The protein belongs to the class-I aminoacyl-tRNA synthetase family. TyrS type 1 subfamily. As to quaternary structure, homodimer.

It is found in the cytoplasm. The enzyme catalyses tRNA(Tyr) + L-tyrosine + ATP = L-tyrosyl-tRNA(Tyr) + AMP + diphosphate + H(+). Catalyzes the attachment of tyrosine to tRNA(Tyr) in a two-step reaction: tyrosine is first activated by ATP to form Tyr-AMP and then transferred to the acceptor end of tRNA(Tyr). The polypeptide is Tyrosine--tRNA ligase (Bifidobacterium animalis subsp. lactis (strain AD011)).